The primary structure comprises 470 residues: Aminoacyl transferase sphA (470 aa).

Pyridoxal 5'-phosphate contacts are provided by S212, H244, and T272. Position 275 is an N6-(pyridoxal phosphate)lysine (K275).

Belongs to the class-II pyridoxal-phosphate-dependent aminotransferase family. BioF subfamily. Homodimer. It depends on pyridoxal 5'-phosphate as a cofactor.

It participates in secondary metabolite biosynthesis. In terms of biological role, aminoacyl transferase; part of the gene cluster that mediates the biosynthesis of sphingofungins, bioactive molecules acting as sphingolipid inhibitors via inhibiting serine palmitoyl transferase (SPT). Within the pathway, sphA transfers 2-methyl-aminomalonate and 2-hydroxymethyl-aminomalonate onto the sphB product 3-hydroxyoctadeca-4,10-dienoyl-ACP to produce the precursors of sphingofungins E and F. The substrate specificity of sphA using 2-methyl-aminomalonate and 2-hydroxymethyl-aminomalonate instread of aminomalonate is responsible for the biosynthesis of sphingofungins E and F but not B and C like in Aspergillus fumigatus. The PKS sphB does not contain any putative thioesterase domain for releasing the nascent polyketide chain and it has been suggested that aminoacyl transferases can facilitate the polyketide chain release. The protein is Aminoacyl transferase sphA of Byssochlamys spectabilis (Paecilomyces variotii).